Consider the following 510-residue polypeptide: Protein disulfide-isomerase (510 aa).

The first 19 residues, 1–19 (MLRRALLCLAVAAAPGLYA), serve as a signal peptide directing secretion. Residues 20-136 (DAPEEEDHVL…IVNWLKKRTG (117 aa)) form the Thioredoxin 1 domain. Active-site nucleophile residues include cysteine 55 and cysteine 58. An intrachain disulfide couples cysteine 55 to cysteine 58. The residue at position 202 (lysine 202) is an N6-acetyllysine. N6-succinyllysine is present on residues lysine 224 and lysine 273. 2 positions are modified to phosphoserine: serine 333 and serine 359. Positions 351-477 (GKIKPHLMSQ…FKKFLESGGQ (127 aa)) constitute a Thioredoxin 2 domain. Catalysis depends on nucleophile residues cysteine 399 and cysteine 402. Cysteine 399 and cysteine 402 are oxidised to a cystine. Serine 429 is subject to Phosphoserine. The disordered stretch occupies residues 473 to 510 (ESGGQDGAGDDDDLEDLEEAEEPDMEEDDDQKAVKDEL). Positions 480–502 (AGDDDDLEDLEEAEEPDMEEDDD) are enriched in acidic residues. The short motif at 507-510 (KDEL) is the Prevents secretion from ER element.

It belongs to the protein disulfide isomerase family. Heterodimer; heterodimerizes with the protein microsomal triglyceride transfer MTTP. Homodimer. Homodimer. Monomers and homotetramers may also occur. Interacts with P4HA2, forming a heterotetramer consisting of 2 alpha subunits (P4HA2) and 2 beta (P4HB), where P4HB plays the role of a structural subunit; this tetramer catalyzes the formation of 4-hydroxyproline in collagen. Also constitutes the structural subunit of the microsomal triacylglycerol transfer protein MTTP in mammalian cells. Stabilizes both enzymes and retain them in the ER without contributing to the catalytic activity. Binds UBQLN1. Interacts with ERO1B. Interacts with ILDR2. Interacts with ERN1/IRE1A (via N-terminus); the interaction is enhanced by phosphorylation of P4HB by FAM20C in response to endoplasmic reticulum stress and results in attenuation of ERN1 activity. In terms of processing, phosphorylation of Ser-359 by FAM20C is induced by endoplasmic reticulum stress and results in a functional switch from oxidoreductase to molecular chaperone. It also promotes interaction with ERN1.

The protein resides in the endoplasmic reticulum. The protein localises to the endoplasmic reticulum lumen. It is found in the melanosome. Its subcellular location is the cell membrane. The enzyme catalyses Catalyzes the rearrangement of -S-S- bonds in proteins.. This multifunctional protein catalyzes the formation, breakage and rearrangement of disulfide bonds. At the cell surface, seems to act as a reductase that cleaves disulfide bonds of proteins attached to the cell. May therefore cause structural modifications of exofacial proteins. Inside the cell, seems to form/rearrange disulfide bonds of nascent proteins. At high concentrations and following phosphorylation by FAM20C, functions as a chaperone that inhibits aggregation of misfolded proteins. At low concentrations, facilitates aggregation (anti-chaperone activity). May be involved with other chaperones in the structural modification of the TG precursor in hormone biogenesis. Also acts as a structural subunit of various enzymes such as prolyl 4-hydroxylase and microsomal triacylglycerol transfer protein MTTP. Receptor for LGALS9; the interaction retains P4HB at the cell surface of Th2 T helper cells, increasing disulfide reductase activity at the plasma membrane, altering the plasma membrane redox state and enhancing cell migration. The chain is Protein disulfide-isomerase (P4HB) from Macaca fuscata fuscata (Japanese macaque).